The primary structure comprises 840 residues: UPF0508 protein SCY_2952 (840 aa).

Belongs to the UPF0508 family.

In Saccharomyces cerevisiae (strain YJM789) (Baker's yeast), this protein is UPF0508 protein SCY_2952.